A 203-amino-acid polypeptide reads, in one-letter code: MKLRWLMWLVVFLAGCSSTPDYKNPPWNPEVPVKRAMQWMPITEKAGNAWGVSPRLVTAIIAVESGGNPTLVSKSNAVGLMQIKASTAGREVYRYMGWSGQPSSSELKNPERNISIGTAYLSILEHGVLKGIEAPETMQYALVVSYVNGAGALLRTFSSDRKAAIEKINDLSPDEFVEHVAKNHPAPQAPRYIWKVQQAMNAM.

A signal peptide spans 1–15 (MKLRWLMWLVVFLAG). C16 carries N-palmitoyl cysteine lipidation. Residue C16 is the site of S-diacylglycerol cysteine attachment.

Belongs to the transglycosylase Slt family.

Its subcellular location is the cell outer membrane. It carries out the reaction Endolytic cleavage of the (1-&gt;4)-beta-glycosidic linkage between N-acetylmuramic acid (MurNAc) and N-acetylglucosamine (GlcNAc) residues in peptidoglycan with concomitant formation of a 1,6-anhydrobond in the MurNAc residue.. Murein-degrading enzyme. May play a role in recycling of muropeptides during cell elongation and/or cell division. Preferentially cleaves at a distance of more than two disaccharide units from the ends of the glycan chain. This chain is Endo-type membrane-bound lytic murein transglycosylase A, found in Cronobacter sakazakii (strain ATCC BAA-894) (Enterobacter sakazakii).